The primary structure comprises 93 residues: SH3 domain-binding glutamic acid-rich-like protein 3 (93 aa).

At Ser2 the chain carries N-acetylserine. O-linked (GalNAc...) serine glycosylation is present at Ser2. In terms of domain architecture, Glutaredoxin spans 2–93 (SGRRVYSTSV…NTLQEFLKLA (92 aa)). O-linked (GalNAc...) threonine glycans are attached at residues Thr9 and Thr12.

This sequence belongs to the SH3BGR family. Homodimer. Interacts with MYO1C (via its IQ motifs); the interaction is dependent on calcium and takes place at membrane ruffles. In terms of processing, may be glycosylated.

Its subcellular location is the cytoplasm. It is found in the cytosol. The protein localises to the cell projection. It localises to the ruffle membrane. The protein resides in the nucleus. In terms of biological role, could act as a modulator of glutaredoxin biological activity. May play a role in cytoskeleton organization. This is SH3 domain-binding glutamic acid-rich-like protein 3 (SH3BGRL3) from Pongo abelii (Sumatran orangutan).